Consider the following 57-residue polypeptide: Protein GnsB (57 aa).

This sequence belongs to the gns family.

Functionally, overexpression increases levels of unsaturated fatty acids and suppresses both the temperature-sensitive fabA6 mutation and cold-sensitive secG null mutation. In Escherichia coli (strain K12), this protein is Protein GnsB (gnsB).